The chain runs to 438 residues: 2-(3-amino-3-carboxypropyl)histidine synthase subunit 1 (438 aa).

Positions 1 to 24 (MAALVVSETAEPGSRVGPGRGRIS) are disordered. Positions 110, 214, and 342 each coordinate [4Fe-4S] cluster. The tract at residues 402-438 (LCQPASDKVQQGSRGGSPAPACESCNCADQKATSPAP) is disordered. Ser-418 is subject to Phosphoserine.

Belongs to the DPH1/DPH2 family. DPH1 subfamily. Component of the 2-(3-amino-3-carboxypropyl)histidine synthase complex composed of DPH1, DPH2, DPH3 and a NADH-dependent reductase. Interacts with DPH2. Interacts with RBM8A. The cofactor is [4Fe-4S] cluster. In terms of tissue distribution, strongly expressed in kidney and liver. Moderately expressed in brain, skin and testis. Weakly expressed in heart, lung, small intestine, spleen, stomach and thymus.

The protein resides in the nucleus. Its subcellular location is the cytoplasm. It carries out the reaction L-histidyl-[translation elongation factor 2] + S-adenosyl-L-methionine = 2-[(3S)-amino-3-carboxypropyl]-L-histidyl-[translation elongation factor 2] + S-methyl-5'-thioadenosine + H(+). Its pathway is protein modification; peptidyl-diphthamide biosynthesis. Its function is as follows. Catalyzes the first step of diphthamide biosynthesis, a post-translational modification of histidine which occurs in elongation factor 2. DPH1 and DPH2 transfer a 3-amino-3-carboxypropyl (ACP) group from S-adenosyl-L-methionine (SAM) to a histidine residue, the reaction is assisted by a reduction system comprising DPH3 and a NADH-dependent reductase. Acts as a tumor suppressor. The polypeptide is 2-(3-amino-3-carboxypropyl)histidine synthase subunit 1 (Mus musculus (Mouse)).